A 196-amino-acid chain; its full sequence is Interferon lambda-3 (196 aa).

The N-terminal stretch at 1–21 is a signal peptide; sequence MTGDCMPVLVLMAAVLTVTGA. Intrachain disulfides connect Cys-37–Cys-136, Cys-71–Cys-169, and Cys-188–Cys-195.

This sequence belongs to the lambda interferon family.

Its subcellular location is the secreted. In terms of biological role, cytokine with antiviral, antitumour and immunomodulatory activities. Plays a critical role in the antiviral host defense, predominantly in the epithelial tissues. Acts as a ligand for the heterodimeric class II cytokine receptor composed of IL10RB and IFNLR1, and receptor engagement leads to the activation of the JAK/STAT signaling pathway resulting in the expression of IFN-stimulated genes (ISG), which mediate the antiviral state. Has a restricted receptor distribution and therefore restricted targets: is primarily active in epithelial cells and this cell type-selective action is because of the epithelial cell-specific expression of its receptor IFNLR1. Seems not to be essential for early virus-activated host defense in vaginal infection, but plays an important role in Toll-like receptor (TLR)-induced antiviral defense. Plays a significant role in the antiviral immune defense in the intestinal epithelium. Exerts an immunomodulatory effect by up-regulating MHC class I antigen expression. The protein is Interferon lambda-3 (IFNL3) of Homo sapiens (Human).